The chain runs to 591 residues: MVTVVENIDPKIKPVPAVIKELEEKYAGKFVVQHTVDEIPTVWVARADLLDVLLFLRKLPKPYVMLFDLSAIDERLRQHRQGLPESDFTVFYHLMSLERNSDVRIKVALSEEDLNVPSATQIWPNANWYEREVWDMFGIVFTGHPHLTRILLPKYWEGHPLRKEYHARATEFTPYFLNTAKQQYEQENLRFVPEEWGMKRSGRDEDFMFLNIGPNHPSAHGAFRLVLQLDGEEVVDCIPDIGYHHRGAEKMAERQTWHSFIPYTDRIDYLGGVMNELPYIMSVEKLAGITIPPRAETIRVMMSEFFRITNNLLFVGTFIQDAGGMTPVFYMFTDRQKAYDVIEAVTGYRMHPAWFRIGGTAHDLPRGWQRLVREFLDWMPKRLDEYVKAALQNSVLKGRTQGVAQYNTKQALAWGVTGAGLRATGLDFDLRKARPYMGYENYDFEVPVGYNGDAYDRCMVKVEEMRQSLRIIRQCMDNMPQGPYKADHPLAVPPPKDRTLNDIETLINHFISVSWGPVMPAGECTTIVEATKGLNSYYITSDKATMSYRTRIRTPTFAHLQQMPSVINGSLVSDAIMYLASIDVVMADCDR.

An NADH dehydrogenase I subunit C region spans residues 1 to 182; it reads MVTVVENIDP…TPYFLNTAKQ (182 aa). The segment at 206-591 is NADH dehydrogenase I subunit D; that stretch reads DFMFLNIGPN…IDVVMADCDR (386 aa).

This sequence in the N-terminal section; belongs to the complex I 30 kDa subunit family. The protein in the C-terminal section; belongs to the complex I 49 kDa subunit family. NDH-1 is composed of 13 different subunits. Subunits NuoB, CD, E, F, and G constitute the peripheral sector of the complex.

The protein resides in the cell inner membrane. The catalysed reaction is a quinone + NADH + 5 H(+)(in) = a quinol + NAD(+) + 4 H(+)(out). Its function is as follows. NDH-1 shuttles electrons from NADH, via FMN and iron-sulfur (Fe-S) centers, to quinones in the respiratory chain. The immediate electron acceptor for the enzyme in this species is believed to be ubiquinone. Couples the redox reaction to proton translocation (for every two electrons transferred, four hydrogen ions are translocated across the cytoplasmic membrane), and thus conserves the redox energy in a proton gradient. The chain is NADH-quinone oxidoreductase subunit C/D from Psychrobacter arcticus (strain DSM 17307 / VKM B-2377 / 273-4).